Reading from the N-terminus, the 176-residue chain is 3-hydroxydecanoyl-[acyl-carrier-protein] dehydratase (176 aa).

Residue His-71 is part of the active site.

The protein belongs to the thioester dehydratase family. FabA subfamily. In terms of assembly, homodimer.

Its subcellular location is the cytoplasm. It carries out the reaction a (3R)-hydroxyacyl-[ACP] = a (2E)-enoyl-[ACP] + H2O. The enzyme catalyses (3R)-hydroxydecanoyl-[ACP] = (2E)-decenoyl-[ACP] + H2O. It catalyses the reaction (2E)-decenoyl-[ACP] = (3Z)-decenoyl-[ACP]. Its pathway is lipid metabolism; fatty acid biosynthesis. Necessary for the introduction of cis unsaturation into fatty acids. Catalyzes the dehydration of (3R)-3-hydroxydecanoyl-ACP to E-(2)-decenoyl-ACP and then its isomerization to Z-(3)-decenoyl-ACP. Can catalyze the dehydratase reaction for beta-hydroxyacyl-ACPs with saturated chain lengths up to 16:0, being most active on intermediate chain length. The polypeptide is 3-hydroxydecanoyl-[acyl-carrier-protein] dehydratase (Rhodopseudomonas palustris (strain BisB18)).